Reading from the N-terminus, the 176-residue chain is MKKSIFSKKLLVSFGSLVALAAIPLIAISCGQTDNNSSQSQQPGSGTTNTSGGTNSSGSTNGTAGTNSSGSTNGSGNGSNSETNTGNKTTSESNSGSSTGSQAGTTTNTGSGSNSESGMNSEKTENTQQSEAPGTNTGNKTTSESNSESGMNSEKTENTQQSEAPGTKTENTQHTS.

Residues 1 to 29 (MKKSIFSKKLLVSFGSLVALAAIPLIAIS) form the signal peptide. Cys30 is lipidated: N-palmitoyl cysteine. A lipid anchor (S-diacylglycerol cysteine) is attached at Cys30. Residues 33-176 (TDNNSSQSQQ…TKTENTQHTS (144 aa)) form a disordered region. Over residues 35–121 (NNSSQSQQPG…GSNSESGMNS (87 aa)) the composition is skewed to low complexity. Repeat 1 spans residues 123 to 135 (KTENTQQSEAPGT). The 2.5 X 13 AA repeats stretch occupies residues 123–176 (KTENTQQSEAPGTNTGNKTTSESNSESGMNSEKTENTQQSEAPGTKTENTQHTS). Positions 126–142 (NTQQSEAPGTNTGNKTT) are enriched in polar residues. Residues 143–153 (SESNSESGMNS) show a composition bias toward low complexity. The stretch at 155–167 (KTENTQQSEAPGT) is repeat 2. Positions 158 to 176 (NTQQSEAPGTKTENTQHTS) are enriched in polar residues. One copy of the 3; truncated repeat lies at 168–176 (KTENTQHTS).

Its subcellular location is the cell membrane. Functionally, responsible for the antigenic diversity for host adaptation. In Mesomycoplasma hyorhinis (Mycoplasma hyorhinis), this protein is Variant surface antigen A (vlpA).